Reading from the N-terminus, the 234-residue chain is Ubiquinone biosynthesis O-methyltransferase (234 aa).

The S-adenosyl-L-methionine site is built by Arg39, Gly59, Asp80, and Met124.

It belongs to the methyltransferase superfamily. UbiG/COQ3 family.

It catalyses the reaction a 3-demethylubiquinol + S-adenosyl-L-methionine = a ubiquinol + S-adenosyl-L-homocysteine + H(+). It carries out the reaction a 3-(all-trans-polyprenyl)benzene-1,2-diol + S-adenosyl-L-methionine = a 2-methoxy-6-(all-trans-polyprenyl)phenol + S-adenosyl-L-homocysteine + H(+). It participates in cofactor biosynthesis; ubiquinone biosynthesis. In terms of biological role, O-methyltransferase that catalyzes the 2 O-methylation steps in the ubiquinone biosynthetic pathway. This chain is Ubiquinone biosynthesis O-methyltransferase, found in Aliivibrio fischeri (strain ATCC 700601 / ES114) (Vibrio fischeri).